Consider the following 481-residue polypeptide: FAD-linked oxidoreductase afoF (481 aa).

Positions 1 to 16 (MRFLLQSITLVAAARA) are cleaved as a signal peptide. The FAD-binding PCMH-type domain occupies 52-227 (SEWRPPTWTG…TAATFKMFDQ (176 aa)). N-linked (GlcNAc...) asparagine glycosylation occurs at N82. H92 bears the Pros-8alpha-FAD histidine mark. N196, N241, N276, N309, N312, and N376 each carry an N-linked (GlcNAc...) asparagine glycan.

This sequence belongs to the oxygen-dependent FAD-linked oxidoreductase family. FAD serves as cofactor.

Functionally, FAD-linked oxidoreductase; part of the gene cluster that mediates the biosynthesis of asperfuranone, a probable antitumor agent. The polyketide synthase afoG is responsible for producing the 3,5-dimethyloctadienone moiety from acetyl-CoA, three malonyl-CoA, and two S-adenosyl methionines (SAM). The 3,5-dimethyloctadienone moiety is then loaded onto the SAT domain of afoE and extended with four malonyl-CoA and one SAM, which leads to the formation of 2,4-dihydroxy-6-(5,7-dimethyl-2-oxo-trans-3-trans-5-nonadienyl)-3-methylbenzaldehyde (compound 2) after reductive release and aldol condensation. AfoD is the next enzyme in the biosynthesis sequence and hydroxylates the side chain at the benzylic position of compound 2. After benzylic hydroxylation, a furan ring is formed after five-member ring hemiacetal formation and water elimination. AfoF and afoC are proposed to oxidize the R-diketone proton and to reduce the unconjugated carbonyl group, respectively, to generate asperfuranone. Since no intermediates could be isolated from afoF and afoC deletants, the sequence of these two enzymes is not fully understood. Moreover, since afoC deletant still produces a small amount of asperfuranone, other endogenous oxidoreductases might catalyze the same reaction with much less efficiency. The protein is FAD-linked oxidoreductase afoF of Emericella nidulans (strain FGSC A4 / ATCC 38163 / CBS 112.46 / NRRL 194 / M139) (Aspergillus nidulans).